Here is a 143-residue protein sequence, read N- to C-terminus: uncharacterized protein (143 aa).

Positions 1–14 are enriched in basic and acidic residues; sequence MPAAKKQIEEKPEV. A disordered region spans residues 1–25; that stretch reads MPAAKKQIEEKPEVEQDLGAPDFSD.

This is an uncharacterized protein from Pseudoalteromonas phage PM2 (Bacteriophage PM2).